Consider the following 177-residue polypeptide: Peptidyl-tRNA hydrolase (177 aa).

Tyr-18 lines the tRNA pocket. His-23 acts as the Proton acceptor in catalysis. Residues Phe-65, Asn-67, and Asn-113 each coordinate tRNA.

The protein belongs to the PTH family. As to quaternary structure, monomer.

The protein resides in the cytoplasm. The catalysed reaction is an N-acyl-L-alpha-aminoacyl-tRNA + H2O = an N-acyl-L-amino acid + a tRNA + H(+). In terms of biological role, hydrolyzes ribosome-free peptidyl-tRNAs (with 1 or more amino acids incorporated), which drop off the ribosome during protein synthesis, or as a result of ribosome stalling. Functionally, catalyzes the release of premature peptidyl moieties from peptidyl-tRNA molecules trapped in stalled 50S ribosomal subunits, and thus maintains levels of free tRNAs and 50S ribosomes. In Corynebacterium efficiens (strain DSM 44549 / YS-314 / AJ 12310 / JCM 11189 / NBRC 100395), this protein is Peptidyl-tRNA hydrolase.